Consider the following 248-residue polypeptide: tRNA (guanine-N(1)-)-methyltransferase (248 aa).

Residues G113 and 133-138 each bind S-adenosyl-L-methionine; that span reads VGDYVL.

It belongs to the RNA methyltransferase TrmD family. In terms of assembly, homodimer.

The protein localises to the cytoplasm. It carries out the reaction guanosine(37) in tRNA + S-adenosyl-L-methionine = N(1)-methylguanosine(37) in tRNA + S-adenosyl-L-homocysteine + H(+). Its function is as follows. Specifically methylates guanosine-37 in various tRNAs. This Shewanella sp. (strain ANA-3) protein is tRNA (guanine-N(1)-)-methyltransferase.